Here is a 259-residue protein sequence, read N- to C-terminus: MADILKIGKYEFTSRLIVGSGKYPDFKTTYDATIASGAQMITVAVRRVNITDPNKENLMDYFKDSDVQLLPNSAGCTTAEEAITLFRMVREATGIDIIKLEIIGDTEKTLYPDVIETIKACEVLANDGFTVMAYTNDDPITAKKLENAGAAAVMPLAAPIGSGLGIQNRYNVVFVKEAVNVPVIVDAGVGCASDAAIAMELGADGVLTNTAIAQAKNPIQMAEAMKYAVIAGRMSYLAGRIPKKPYATASSPSEGMIQF.

The active-site Schiff-base intermediate with DXP is the Lys-99. Residues Gly-161, 187–188, and 209–210 each bind 1-deoxy-D-xylulose 5-phosphate; these read AG and NT.

It belongs to the ThiG family. In terms of assembly, homotetramer. Forms heterodimers with either ThiH or ThiS.

Its subcellular location is the cytoplasm. It carries out the reaction [ThiS sulfur-carrier protein]-C-terminal-Gly-aminoethanethioate + 2-iminoacetate + 1-deoxy-D-xylulose 5-phosphate = [ThiS sulfur-carrier protein]-C-terminal Gly-Gly + 2-[(2R,5Z)-2-carboxy-4-methylthiazol-5(2H)-ylidene]ethyl phosphate + 2 H2O + H(+). It participates in cofactor biosynthesis; thiamine diphosphate biosynthesis. Catalyzes the rearrangement of 1-deoxy-D-xylulose 5-phosphate (DXP) to produce the thiazole phosphate moiety of thiamine. Sulfur is provided by the thiocarboxylate moiety of the carrier protein ThiS. In vitro, sulfur can be provided by H(2)S. In Nitratiruptor sp. (strain SB155-2), this protein is Thiazole synthase.